The chain runs to 375 residues: MFRLARAQTALANKASVSRSFLRLNSSFAIPETQKGVIFYENGGKLEYKDLPVPKPKANEILINVKYSGVCHTDLHAWKGDWPLPVKLPLVGGHEGAGIVVAKGENVKNFEIGDYAGIKWLNGSCMSCELCEQGYESNCLQADLSGYTHDGSFQQYATADAVQAAQIPKGTDLAEIAPILCAGVTVYKALKTADLKPGQWVAISGAAGGLGSLAVQYAKAMGLRVLGIDGGDGKEELFKQCGGEVFIDFRKSKDMVADIQEATNGGPHGVINVSVSEAAISMSTEYVRPTGVVVLVGLPADAYVKSEVFSHVVKSISIKGSYVGNRADTREATDFFTRGLVKSPIKIIGLSELPEAYELMEQGKILGRFVVDTYK.

The N-terminal 27 residues, 1–27 (MFRLARAQTALANKASVSRSFLRLNSS), are a transit peptide targeting the mitochondrion. Residues cysteine 71, histidine 94, cysteine 125, cysteine 128, cysteine 131, cysteine 139, and cysteine 181 each contribute to the Zn(2+) site. Residues 205–211 (GAAGGLG), aspartate 229, lysine 234, 296–298 (VGL), and arginine 368 contribute to the NAD(+) site.

Belongs to the zinc-containing alcohol dehydrogenase family. As to quaternary structure, homotetramer. Requires Zn(2+) as cofactor.

It localises to the mitochondrion matrix. The enzyme catalyses a primary alcohol + NAD(+) = an aldehyde + NADH + H(+). It catalyses the reaction a secondary alcohol + NAD(+) = a ketone + NADH + H(+). The protein is Alcohol dehydrogenase 4, mitochondrial (ADH4) of Kluyveromyces lactis (strain ATCC 8585 / CBS 2359 / DSM 70799 / NBRC 1267 / NRRL Y-1140 / WM37) (Yeast).